The chain runs to 1482 residues: Cystic fibrosis transmembrane conductance regulator (1482 aa).

Residues Met-1–Phe-77 are Cytoplasmic-facing. The chain crosses the membrane as a helical span at residues Phe-78 to Gln-98. The ABC transmembrane type-1 1 domain maps to Phe-81–Leu-365. Residues Pro-99–Tyr-122 lie on the Extracellular side of the membrane. The helical transmembrane segment at Leu-123–His-146 threads the bilayer. Residues His-147–Leu-195 lie on the Cytoplasmic side of the membrane. Residues Ala-196–Trp-216 traverse the membrane as a helical segment. The Extracellular portion of the chain corresponds to Glu-217–Ser-222. A helical membrane pass occupies residues Ala-223–Met-243. Residues Met-244–Lys-298 are Cytoplasmic-facing. A helical transmembrane segment spans residues Ala-299 to Phe-319. The Extracellular portion of the chain corresponds to Leu-320–Thr-339. The helical transmembrane segment at Ile-340 to Val-358 threads the bilayer. The Cytoplasmic segment spans residues Gln-359–Ser-859. Residues Trp-401, Gly-458–Thr-465, and Gln-493 each bind ATP. Residues Asn-423–Gly-646 enclose the ABC transporter 1 domain. Cys-524 is lipidated: S-palmitoyl cysteine. 2 positions are modified to phosphoserine: Ser-549 and Ser-660. The interval Ser-654 to Glu-832 is disordered R region. Ser-670 is modified (phosphoserine; by PKA). Ser-686 is modified (phosphoserine). Residue Lys-688 forms a Glycyl lysine isopeptide (Lys-Gly) (interchain with G-Cter in ubiquitin) linkage. Ser-700 and Ser-712 each carry phosphoserine. Thr-717 carries the post-translational modification Phosphothreonine. Phosphoserine is present on residues Ser-738, Ser-769, Ser-791, Ser-796, and Ser-814. A helical transmembrane segment spans residues Leu-860–Ala-880. An ABC transmembrane type-1 2 domain is found at Leu-860 to Ser-1156. Over Val-881 to Ile-919 the chain is Extracellular. Asn-895 and Asn-901 each carry an N-linked (GlcNAc...) asparagine glycan. Residues Tyr-920–His-940 form a discontinuously helical membrane-spanning segment. At Thr-941–Thr-991 the chain is on the cytoplasmic side. Residues Ile-992–Leu-1012 form a helical membrane-spanning segment. Residues Gln-1013–Pro-1014 lie on the Extracellular side of the membrane. The chain crosses the membrane as a helical span at residues Tyr-1015 to Leu-1035. The Cytoplasmic segment spans residues His-1036–Thr-1096. A helical transmembrane segment spans residues Leu-1097–Phe-1117. Residues Ile-1118–Gly-1131 are Extracellular-facing. The helical transmembrane segment at Ile-1132–Ile-1152 threads the bilayer. Over Asp-1153–Leu-1482 the chain is Cytoplasmic. The 234-residue stretch at Met-1212 to Pro-1445 folds into the ABC transporter 2 domain. ATP is bound by residues Tyr-1221 and Gly-1246 to Ser-1253. Residues Arg-1388–Leu-1482 are interaction with GORASP2. Cys-1397 carries the S-palmitoyl cysteine lipid modification. 2 positions are modified to phosphoserine: Ser-1446 and Ser-1458. The interval Lys-1450 to Leu-1482 is disordered. Positions Leu-1451–Arg-1463 are enriched in basic residues. Residues Glu-1472–Leu-1482 are compositionally biased toward acidic residues. The PDZ-binding motif lies at Thr-1480 to Leu-1482.

It belongs to the ABC transporter superfamily. ABCC family. CFTR transporter (TC 3.A.1.202) subfamily. Monomer; does not require oligomerization for channel activity. May form oligomers in the membrane. Interacts with SLC26A3, SLC26A6 and NHERF1. Interacts with SHANK2. Interacts with MYO6. Interacts (via C-terminus) with GOPC (via PDZ domain); this promotes CFTR internalization and thereby decreases channel activity. Interacts with SLC4A7 through NHERF1. Found in a complex with MYO5B and RAB11A. Interacts with ANO1. Interacts with SLC26A8. Interacts with AHCYL1; the interaction increases CFTR activity. Interacts with CSE1L. The core-glycosylated form interacts with GORASP2 (via PDZ GRASP-type 1 domain) in respone to ER stress. Interacts with MARCHF2; the interaction leads to CFTR ubiqtuitination and degradation. Interacts with ADGRG2. N-glycosylated. Post-translationally, phosphorylated; cAMP treatment promotes phosphorylation and activates the channel. Dephosphorylation decreases the ATPase activity (in vitro). Phosphorylation at PKA sites activates the channel. Phosphorylation at PKC sites enhances the response to phosphorylation by PKA. Phosphorylated by AMPK; this inhibits channel activity. In terms of processing, ubiquitinated, leading to its degradation in the lysosome. Deubiquitination by USP10 in early endosomes enhances its endocytic recycling to the cell membrane. Ubiquitinated by RNF185 during ER stress. Ubiquitinated by MARCHF2.

The protein localises to the apical cell membrane. The protein resides in the early endosome membrane. It localises to the cell membrane. Its subcellular location is the recycling endosome membrane. It is found in the endoplasmic reticulum membrane. The protein localises to the nucleus. It catalyses the reaction ATP + H2O + closed Cl(-) channel = ADP + phosphate + open Cl(-) channel.. The enzyme catalyses chloride(in) = chloride(out). It carries out the reaction hydrogencarbonate(in) = hydrogencarbonate(out). The catalysed reaction is ATP + H2O = ADP + phosphate + H(+). Its function is as follows. Epithelial ion channel that plays an important role in the regulation of epithelial ion and water transport and fluid homeostasis. Mediates the transport of chloride ions across the cell membrane. Possesses an intrinsic ATPase activity and utilizes ATP to gate its channel; the passive flow of anions through the channel is gated by cycles of ATP binding and hydrolysis by the ATP-binding domains. The ion channel is also permeable to HCO(3)(-); selectivity depends on the extracellular chloride concentration. Exerts its function also by modulating the activity of other ion channels and transporters. Contributes to the regulation of the pH and the ion content of the epithelial fluid layer. Modulates the activity of the epithelial sodium channel (ENaC) complex, in part by regulating the cell surface expression of the ENaC complex. May regulate bicarbonate secretion and salvage in epithelial cells by regulating the transporter SLC4A7. Can inhibit the chloride channel activity of ANO1. Plays a role in the chloride and bicarbonate homeostasis during sperm epididymal maturation and capacitation. The chain is Cystic fibrosis transmembrane conductance regulator from Otolemur garnettii (Small-eared galago).